The sequence spans 361 residues: Phospho-N-acetylmuramoyl-pentapeptide-transferase (361 aa).

Helical transmembrane passes span 28–48 (LAVL…IKFL), 74–94 (TMGG…LADL), 99–119 (IWIT…DDYA), 135–155 (LLLQ…TIDS), 167–187 (SLSM…IVGA), 203–223 (VPIA…GNLI), 236–256 (TGEL…FLWF), 263–283 (VFMG…ISVI), 288–308 (IVLG…IMQV), and 338–358 (KVVI…LSSL).

The protein belongs to the glycosyltransferase 4 family. MraY subfamily. Mg(2+) serves as cofactor.

The protein resides in the cell inner membrane. It carries out the reaction UDP-N-acetyl-alpha-D-muramoyl-L-alanyl-gamma-D-glutamyl-meso-2,6-diaminopimeloyl-D-alanyl-D-alanine + di-trans,octa-cis-undecaprenyl phosphate = di-trans,octa-cis-undecaprenyl diphospho-N-acetyl-alpha-D-muramoyl-L-alanyl-D-glutamyl-meso-2,6-diaminopimeloyl-D-alanyl-D-alanine + UMP. It functions in the pathway cell wall biogenesis; peptidoglycan biosynthesis. Functionally, catalyzes the initial step of the lipid cycle reactions in the biosynthesis of the cell wall peptidoglycan: transfers peptidoglycan precursor phospho-MurNAc-pentapeptide from UDP-MurNAc-pentapeptide onto the lipid carrier undecaprenyl phosphate, yielding undecaprenyl-pyrophosphoryl-MurNAc-pentapeptide, known as lipid I. This is Phospho-N-acetylmuramoyl-pentapeptide-transferase from Rickettsia bellii (strain OSU 85-389).